The primary structure comprises 1051 residues: Leucine zipper protein 1 (1051 aa).

The residue at position 2 (alanine 2) is an N-acetylalanine. Residues 11-354 (ASNRHLRFKL…KLQVKKQKEL (344 aa)) adopt a coiled-coil conformation. 4 disordered regions span residues 247 to 293 (ISST…KDLN), 374 to 401 (RTKL…HKRE), 432 to 554 (AAKA…SQVT), and 569 to 601 (ASSQ…SKAP). Residues 254–293 (KESRRKGSLDYLKQVENETRDKSENEKNRNQEDNKVKDLN) are compositionally biased toward basic and acidic residues. A phosphoserine mark is found at serine 256, serine 261, serine 395, serine 513, serine 571, serine 575, serine 612, and serine 660. The span at 569–578 (ASSQRASSEG) shows a compositional bias: polar residues. The segment at 675-727 (VNTTITPEPEPKLQPNSREKVKSRGGTRTPLFENDKNAAVENDSAKSMRSSSN) is disordered. Position 680 is a phosphothreonine (threonine 680). The residue at position 691 (serine 691) is a Phosphoserine. Residues 707-720 (ENDKNAAVENDSAK) are compositionally biased toward basic and acidic residues. Residue serine 746 is modified to Phosphoserine. Positions 789–799 (VTSKVTSSITI) are enriched in low complexity. The interval 789–837 (VTSKVTSSITIYPSDSSGPRAVPTEAPRERHTSTSNIQVGPPELTSVSN) is disordered. The interval 834 to 884 (SVSNHISSPLELSIHKHDITLQLTEAERVGDGSPKNRAETVVSRSSILIKP) is required for interaction with FLNA. Serine 906 bears the Phosphoserine mark. Over residues 929 to 938 (RDLKCSEDPP) the composition is skewed to basic and acidic residues. The segment at 929 to 1000 (RDLKCSEDPP…TQSSLTASEV (72 aa)) is disordered. 2 stretches are compositionally biased toward polar residues: residues 946–958 (EATN…SSTD) and 989–999 (RRTQSSLTASE). Position 957 is a phosphothreonine (threonine 957). Phosphoserine is present on serine 993.

Component of the CERF-1 ISWI chromatin remodeling complex (also called the CECR2-containing remodeling factor (CERF) complex) at least composed of CECR2 and SMARCA1. Component of the CERF-5 ISWI chromatin remodeling complex at least composed of CECR2 and SMARCA5/SNF2H. LUZP1 is detected as part of the CERF-1 and CERF-5 complexes in embryonic stem (ES) cells where it is involved in complex stabilization but is not detected in the complexes in the testis. Interacts (via C-terminus) with LIMA1/EPLIN; both proteins restrict ciliation and may work together to regulate this process. Interacts with myosin light chain MYL9; the interaction results in inhibition of phosphorylation of MYL9 by DAPK3. Interacts with DAPK3; the interaction is likely to occur throughout the cell cycle and reduces the LUZP1-mediated suppression of MYL9 phosphorylation. Interacts with the chromosomal passenger complex (CPC); CPC kinase activity is required for localization of LUZP1 to the centromere. In terms of tissue distribution, expressed in cerebral cortex, cerebellum, hippocampus and brain stem.

Its subcellular location is the cytoplasm. The protein localises to the cytoskeleton. It is found in the microtubule organizing center. It localises to the centrosome. The protein resides in the cilium basal body. Its subcellular location is the midbody. The protein localises to the chromosome. It is found in the centromere. It localises to the spindle. The protein resides in the stress fiber. Its subcellular location is the nucleus. The protein localises to the cell projection. It is found in the dendrite. It localises to the perikaryon. The protein resides in the cell junction. Its subcellular location is the tight junction. F-actin cross-linking protein. Stabilizes actin and acts as a negative regulator of primary cilium formation. Positively regulates the phosphorylation of both myosin II and protein phosphatase 1 regulatory subunit PPP1R12A/MYPT1 and promotes the assembly of myosin II stacks within actin stress fibers. Inhibits the phosphorylation of myosin light chain MYL9 by DAPK3 and suppresses the constriction velocity of the contractile ring during cytokinesis. Binds to microtubules and promotes epithelial cell apical constriction by up-regulating levels of diphosphorylated myosin light chain (MLC) through microtubule-dependent inhibition of MLC dephosphorylation by myosin phosphatase. Involved in regulation of cell migration, nuclear size and centriole number, probably through regulation of the actin cytoskeleton. Component of the CERF-1 and CERF-5 chromatin remodeling complexes in embryonic stem cells where it acts to stabilize the complexes. Plays a role in embryonic brain and cardiovascular development. The chain is Leucine zipper protein 1 (Luzp1) from Rattus norvegicus (Rat).